The primary structure comprises 118 residues: Ribonuclease P protein component (118 aa).

It belongs to the RnpA family. As to quaternary structure, consists of a catalytic RNA component (M1 or rnpB) and a protein subunit.

It carries out the reaction Endonucleolytic cleavage of RNA, removing 5'-extranucleotides from tRNA precursor.. Functionally, RNaseP catalyzes the removal of the 5'-leader sequence from pre-tRNA to produce the mature 5'-terminus. It can also cleave other RNA substrates such as 4.5S RNA. The protein component plays an auxiliary but essential role in vivo by binding to the 5'-leader sequence and broadening the substrate specificity of the ribozyme. The sequence is that of Ribonuclease P protein component from Vibrio parahaemolyticus serotype O3:K6 (strain RIMD 2210633).